The sequence spans 894 residues: Alpha-actinin-2 (894 aa).

The tract at residues 1 to 254 (MNQIEPGVQY…IMTYVSCFYH (254 aa)) is actin-binding. Calponin-homology (CH) domains are found at residues 38–142 (KQQR…LRFA) and 151–257 (TSAK…HAFA). Threonine 237 is modified (phosphothreonine). Spectrin repeat units lie at residues 281–391 (RLME…WLLN), 401–506 (HLAE…ALER), 516–627 (QLHL…SLQE), and 637–740 (RLRR…EVET). 2 consecutive EF-hand domains span residues 753 to 788 (EQMNEFRASFNHFDRRKNGLMDHEDFRACLISMGYD) and 789 to 824 (LGEAEFARIMTLVDPNGQGTVTFQSFIDFMTRETAD). Ca(2+)-binding residues include aspartate 766, asparagine 770, aspartate 777, aspartate 802, asparagine 804, and threonine 808.

Belongs to the alpha-actinin family. As to quaternary structure, homodimer; antiparallel. Also forms heterodimers with ACTN3. Interacts with ADAM12, MYOZ1, MYOZ2 and MYOZ3. Interacts via its C-terminal region with the LDB3 PDZ domain. Interacts with XIRP2. Interacts with DST isoform 1 (via N-terminus). Interacts with PARVB. Interacts with SYNPO2. Post-translationally, ubiquitinated by FBXL22, leading to proteasomal degradation. In terms of tissue distribution, expressed in both skeletal and cardiac muscle.

It is found in the cytoplasm. The protein resides in the myofibril. Its subcellular location is the sarcomere. It localises to the z line. Its function is as follows. F-actin cross-linking protein which is thought to anchor actin to a variety of intracellular structures. This is a bundling protein. The chain is Alpha-actinin-2 (ACTN2) from Homo sapiens (Human).